The chain runs to 241 residues: 4-hydroxy-tetrahydrodipicolinate reductase (241 aa).

Residues 7 to 12 (GVNGHM), 74 to 76 (GTT), and 98 to 101 (STNM) each bind NAD(+). H131 (proton donor/acceptor) is an active-site residue. H132 contributes to the (S)-2,3,4,5-tetrahydrodipicolinate binding site. Residue K135 is the Proton donor of the active site. 141-142 (GS) is a (S)-2,3,4,5-tetrahydrodipicolinate binding site.

The protein belongs to the DapB family.

The protein localises to the cytoplasm. The catalysed reaction is (S)-2,3,4,5-tetrahydrodipicolinate + NAD(+) + H2O = (2S,4S)-4-hydroxy-2,3,4,5-tetrahydrodipicolinate + NADH + H(+). It catalyses the reaction (S)-2,3,4,5-tetrahydrodipicolinate + NADP(+) + H2O = (2S,4S)-4-hydroxy-2,3,4,5-tetrahydrodipicolinate + NADPH + H(+). Its pathway is amino-acid biosynthesis; L-lysine biosynthesis via DAP pathway; (S)-tetrahydrodipicolinate from L-aspartate: step 4/4. Catalyzes the conversion of 4-hydroxy-tetrahydrodipicolinate (HTPA) to tetrahydrodipicolinate. This is 4-hydroxy-tetrahydrodipicolinate reductase from Alkaliphilus oremlandii (strain OhILAs) (Clostridium oremlandii (strain OhILAs)).